We begin with the raw amino-acid sequence, 472 residues long: Argininosuccinate lyase (472 aa).

This sequence belongs to the lyase 1 family. Argininosuccinate lyase subfamily.

It is found in the cytoplasm. It carries out the reaction 2-(N(omega)-L-arginino)succinate = fumarate + L-arginine. Its pathway is amino-acid biosynthesis; L-arginine biosynthesis; L-arginine from L-ornithine and carbamoyl phosphate: step 3/3. The polypeptide is Argininosuccinate lyase (Rhodococcus jostii (strain RHA1)).